The primary structure comprises 392 residues: Cellobiose 2-epimerase (392 aa).

The protein belongs to the cellobiose 2-epimerase family.

The enzyme catalyses D-cellobiose = beta-D-glucosyl-(1-&gt;4)-D-mannopyranose. Functionally, catalyzes the reversible epimerization of cellobiose to 4-O-beta-D-glucopyranosyl-D-mannose (Glc-Man). Can also epimerize cellotriose to Glc-Glc-Man, cellotetraose to Glc-Glc-Glc-Man, lactose to epilactose, and mannobiose to 4-O-beta-D-mannopyranosyl-D-glucopyranose (Man-Glc). May function as a mannobiose 2-epimerase in vivo and be involved in a mannan catabolic pathway which feeds into glycolysis. This Bacteroides fragilis (strain ATCC 25285 / DSM 2151 / CCUG 4856 / JCM 11019 / LMG 10263 / NCTC 9343 / Onslow / VPI 2553 / EN-2) protein is Cellobiose 2-epimerase (bfce).